Reading from the N-terminus, the 384-residue chain is Probable inactive linolenate hydroperoxide lyase (384 aa).

C346 provides a ligand contact to heme.

It belongs to the cytochrome P450 family. The cofactor is heme. Expressed in roots, leaves, flowers and siliques.

This is Probable inactive linolenate hydroperoxide lyase from Arabidopsis thaliana (Mouse-ear cress).